The following is a 323-amino-acid chain: Mediator of RNA polymerase II transcription subunit 4 (323 aa).

The tract at residues 1-36 (MLPFKKADSPFKSNPVSRVGSSTRLNQLGNIKSNPT) is disordered. Over residues 11-36 (FKSNPVSRVGSSTRLNQLGNIKSNPT) the composition is skewed to polar residues. Positions 79–167 (MVQKVNEYER…VSYRNELKKL (89 aa)) form a coiled coil. 2 stretches are compositionally biased toward basic and acidic residues: residues 241-262 (HELG…KVDH) and 282-303 (DEQR…KEEQ). The disordered stretch occupies residues 241–323 (HELGETDKEN…LFDPDDEYSD (83 aa)).

It belongs to the Mediator complex subunit 4 family. Component of the Mediator complex.

The protein resides in the nucleus. In terms of biological role, component of the Mediator complex, a coactivator involved in the regulated transcription of nearly all RNA polymerase II-dependent genes. Mediator functions as a bridge to convey information from gene-specific regulatory proteins to the basal RNA polymerase II transcription machinery. Mediator is recruited to promoters by direct interactions with regulatory proteins and serves as a scaffold for the assembly of a functional preinitiation complex with RNA polymerase II and the general transcription factors. The polypeptide is Mediator of RNA polymerase II transcription subunit 4 (MED4) (Candida albicans (strain SC5314 / ATCC MYA-2876) (Yeast)).